The following is a 2531-amino-acid chain: MGDISGSVDPSNMAYEPLAIVGMGMRLPGGIHTAEDFWNLLVEKRSSRCKVPSDRFNIEAFYSPSGRVGTVKMEHGHFLGPTDDLQHFDASFFSMSKKEVEILDPQQRMLLEVVYECMQNAGQSNWRGGNIGCYVGVWGEDWVDIHAKDSQDAGMYRISGGQDFAISNRVSYEYDLKGPSFTIKSGCSSSMIALHEAARAIQAGDCDGAIIAGTNLIISPTMSIAMTEQGVLSPDGACKSFDESADGYARGEAINAIYIKRLSDAIRDGDNIRSVIRATASNCDGKTPGITLPSSESHEAMMRRAYKEACLDPTQTAFVEAHGTGTKIGDPLEATAIARVFSSEKGVYIGSVKPNVGHSEGASGVTSIMKAVLALENRTIPPNINFSTPNPQIPFEASNMKVAVEPIPWPKVQAERASVNSFGIGGANAHVILDSPASMGISSTKRNTTNGLSVNGHSINGNSVNGHSVNGHSTNGHSINGNSVNGHSVNGNSVNGHSTNGHSINGHSANGNSINGHSVNGHSKPRPALLVLSATNTESLRANVVKHQQYIETNPEKLVNIEYNLCNRREHLSNRAFCVTDGLSTLQFSPLTKPKKTPTLVMVFTGQGAQWAEMGKELMADFPSFSQDIDLMNNTLSKLDHPPSWNIKEELLKHESVSCLSKAEFAQPLVTAIQVALVNLLRQFGVKPAAVVGHSSGEIAAAYAANAITANEAIIIAYYRGQVTKGFSRRGGMAAVGLGREDVMSFLNPGVSIACENSSSSVTLSGDEDALNATCEIIKTALPDVFLRPLKVEMAYHSHHMKELGEAYEALLRPHLKSTTPVVPFFSSVSGKVVSKSGTLDAAYWRSNLENPVLFNSAIKLILDTLAQDHLFLEIGPHSALAGPIRQILKANSRKNDTYVTALERGKDCGESILKMIGELYLQHISINFKQVAPNGTVLTDLPLYQWCHDQEYWKESRVSKQWRLRKYPNHEILGSRTVEGNELQPEWRNVLHLDNVPWLRDHQIINDVVFPCAGYLSMACEAIRQISASEDFTFRNIVIQTALVMSDSKSVEMITSLRPVRLTNTLNSVWWDFSISSYNGSLWIKHCGGQIRSGTDNPKFKLPRRIEDHPRSVPSPYPAMKKVGLNYGPTFQGLERLSALPKKMTASATLSKSELSESHYAIHPATIDHCLQLFIVSTCEGTLRNINKLCVPTSIDQLYICGGKSTSGIKAEACGAQTSTGTISGDVVAISGDAIILSLIGGQFSPIEEDSSDEDLDTVAGARLDWKPDLDFVQIDNLIRPRQQSTAATKTLEKFTLLSMIDIGRRISGLVTKSEYLEKFRSWINAQVERASEDRYNLVEDAQALTVLNAGERQMLIAELSKEISNSEVATSGELISRVVKNCEDIMVGKIDGIEVLLPENGLTHFYDSLEHRTDCIDFFTAAGHSKPNLRVLEIGSGTGGTSAVVLKGLTSTAQRMYSTYTYTDISSGFFVEAQERFKDYHGLEYKVLDISKDPTEQGFQEGSYDLIIAANVLHATPSLNTTLGHARKLLAEDGRLFLQELSPQVQFANLIMGVLPGWWLGEADGRANEPYISPERWAVELRKAGFSGCDATVYDAEQPYQFNANIISRPAKVDRIARRITLLYEPNLNIQQIKFSLENKGYSVDLCTIQEEPPAGQDIVSLLELETPMFEKISGTDLALFQRLVKNLGTNHLLWVTRSAQIESYDPRFGMVLGLARTLRSELSLSIATLEIDTVDEVAYNAITNVFDKLKNSSSVSDMNPDYEFVLSKGVVNIGRYHPVSVEQELAVSASQSQAVKLEIGRFGLLQTLRWVPDLQNKVGHDQVIVEPRCAGLNFKDVLVSMGIVSGDGLGLEGSGTVVGVGSEVTDFQVGDRVLYIDQNCFSTRTAIPALRCAKIPSTLSWEEAATMPCVYATVIHSLLNLGRIQKGQSVLIHSACGGIGLAAIQICQNIVGAQIYVTVGNEEKVHYLMDTFGISRDHIFNSRDTSFLPAIKAATNGRGVDVVLNSLSGELLHASWECVAEYGSMVEIGKRDFIGKAQLNMDLFESNRSFFGVDLAKFDAARCQLLLVQMMEFYEKGLIKPIAPMKVFEGAKVEDSFRYMQKGSHIGKIVVTIPEQNTDLPLASIVPKLKLNPDAGYLLVGGLGGLGRAVSTWMVERGARHLIFLSRSAGKSDQDQSFFRELESQDCTVQAFTGSVATFQDVQNAVQRASKPIKGVFQMSMVLNDKPFLEMSCSDWETSVLPKVEGTWHLHHALPKDLDFFVATSSLSGSFGNAGQANYAAANTFLDAFVQYRHSLGLPASVVDIGVMGDIGYVSRNAAIQESLRGAGTYFLQEQDFLDSLNWAVAKSAVKPSLPGQNQLLIGVRSSKSLSDPSNRVSFKRDARMGAYLNTGSSTSANTTNATDQLKSFMSSVETDSSILNVPASLDLVTNEIGVRIYTFMLQPIEDLDVSQTLAALGVDSLVTIEIRNWMKRSFGGLEFSTLEILNAGTIEALGLLTIEGLKRKYEMKDGEAKFSEREDTYLLMKAP.

Residues 15–435 (YEPLAIVGMG…GANAHVILDS (421 aa)) form the Ketosynthase family 3 (KS3) domain. Catalysis depends on for beta-ketoacyl synthase activity residues Cys-187, His-322, and His-358. The tract at residues 449–525 (TNGLSVNGHS…GHSVNGHSKP (77 aa)) is disordered. A compositionally biased stretch (low complexity) spans 453–503 (SVNGHSINGNSVNGHSVNGHSTNGHSINGNSVNGHSVNGNSVNGHSTNGHS). Positions 505–521 (NGHSANGNSINGHSVNG) are enriched in polar residues. Positions 602–909 (MVFTGQGAQW…VTALERGKDC (308 aa)) are malonyl-CoA:ACP transacylase (MAT) domain. An N-terminal hotdog fold region spans residues 971 to 1099 (HEILGSRTVE…GQIRSGTDNP (129 aa)). Positions 971–1251 (HEILGSRTVE…GGQFSPIEED (281 aa)) are dehydratase (DH) domain. The 284-residue stretch at 971–1254 (HEILGSRTVE…FSPIEEDSSD (284 aa)) folds into the PKS/mFAS DH domain. The Proton acceptor; for dehydratase activity role is filled by His-1003. The interval 1109 to 1254 (DHPRSVPSPY…FSPIEEDSSD (146 aa)) is C-terminal hotdog fold. Residue Asp-1169 is the Proton donor; for dehydratase activity of the active site. The methyltransferase (CMet) domain stretch occupies residues 1419-1597 (DFFTAAGHSK…FSGCDATVYD (179 aa)). An enoyl reductase (ER) (ER) domain region spans residues 1806 to 2114 (GLLQTLRWVP…KGSHIGKIVV (309 aa)). Residues 2139 to 2312 (GYLLVGGLGG…ASVVDIGVMG (174 aa)) are ketoreductase (KR) domain. The Carrier domain maps to 2413–2505 (MSSVETDSSI…ALGLLTIEGL (93 aa)). Residue Ser-2464 is modified to O-(pantetheine 4'-phosphoryl)serine.

Its pathway is mycotoxin biosynthesis. Its function is as follows. Highly reducing polyketide synthase; part of the gene cluster that mediates the biosynthesis of pneumocandins, lipohexapeptides of the echinocandin family that prevent fungal cell wall formation by non-competitive inhibition of beta-1,3-glucan synthase. The 10,12-dimethylmyristoyl side chain is synthesized by the reducing polyketide synthase gloL/GLPKS4. The thioesterase gloN/GLHYD exclusively interacts with gloL/GLPKS4 to maintain turnover of the polyketide side chain. The 10R,12S-dimethylmyristic acid is then transferred to the first thiolation domain of the nonribosomal peptide synthetase gloA/GLNRPS4 by the acyl-AMP ligase gloD/GLligase, followed by its acylation to L-ornithine to trigger elongation of the cyclic hexapeptide. L-ornithine, 4R-hydroxyl-L-proline (generated from L-proline by the dioxygenase gloF/GLOXY2), 3S-hydroxyl-L-homotyrosine (generated by gloG/GLHtyB, gloH/GLHtyA, gloI/GLHtyC, gloJ/GLHtyD and hydroxylated at C-3 by the dioxygenase gloM/GLOXY1), 3R-hydroxyl-L-glutamine (generated from L-glutamine probably by the dioxygenase gloE/GLOXY3) and 3S-hydroxyl-L-proline (generated from L-proline by the dioxygenase gloF/GLOXY2 to yield pneumocandin B0), or 3S-hydroxyl-4S-methyl-L-proline (generated from L-leucine by the dioxygenase gloC/GLOXY4 to yield pneumocandin A0) are sequentially added to the growing chain. The last C domain of gloA/GLNRPS4 is proposed to be responsible for cyclization by condensation to form the peptide bond between L-ornithine and 3S-hydroxyl-4S-methyl-L-proline (for pneumocandin A0) or 3S-hydroxyl-L-proline (for pneumocandin B0). Finally, the subsequent C-4 hydroxylation of 3S-hydroxyl-L-homotyrosine and L-ornithine dihydroxylation at C-4 and C-5 are performed by the cytochrome P450 monooxygenases gloP/GLP450-1 and gloO/GLP450-2, respectively. In Glarea lozoyensis (strain ATCC 20868 / MF5171), this protein is Highly reducing polyketide synthase gloL.